Consider the following 68-residue polypeptide: uncharacterized protein (68 aa).

The helical transmembrane segment at 24–44 threads the bilayer; that stretch reads AHICKCIAMFFVVAGVVLMFF.

Its subcellular location is the endoplasmic reticulum. It is found in the membrane. This is an uncharacterized protein from Saccharomyces cerevisiae (strain ATCC 204508 / S288c) (Baker's yeast).